The chain runs to 210 residues: Small ribosomal subunit protein uS3 (210 aa).

One can recognise a KH type-2 domain in the interval 17-86 (IDEFLEKELR…NPQIEVEEIK (70 aa)).

The protein belongs to the universal ribosomal protein uS3 family. Part of the 30S ribosomal subunit.

Binds the lower part of the 30S subunit head. This Pyrococcus furiosus (strain ATCC 43587 / DSM 3638 / JCM 8422 / Vc1) protein is Small ribosomal subunit protein uS3.